The following is a 185-amino-acid chain: MANAIIETAKERFTQSHHSLAREYASIRAGRANASLLDRIQVDYYGAPTPLNQLASITVPEARVLLISPFDKSSIKDIERALNASDLGITPANDGSVIRLVIPALTEETRKELAKEVKKVGETAKVSIRNIRRDAMDEAKKQEKAKEITEDELKALEKDIQKATDEAVKEIDRMTADKEKELLSV.

The protein belongs to the RRF family.

It is found in the cytoplasm. In terms of biological role, responsible for the release of ribosomes from messenger RNA at the termination of protein biosynthesis. May increase the efficiency of translation by recycling ribosomes from one round of translation to another. The chain is Ribosome-recycling factor from Streptococcus equi subsp. equi (strain 4047).